We begin with the raw amino-acid sequence, 476 residues long: Siroheme synthase (476 aa).

The interval 1 to 203 (MNYFPVFADL…RQIEAAKKEL (203 aa)) is precorrin-2 dehydrogenase /sirohydrochlorin ferrochelatase. Residues 22-23 (TI) and 43-44 (QK) each bind NAD(+). At Ser128 the chain carries Phosphoserine. Residues 214–476 (GSVSLVGAGP…LDSLRIERVA (263 aa)) are uroporphyrinogen-III C-methyltransferase. Residue Pro223 participates in S-adenosyl-L-methionine binding. Catalysis depends on Asp246, which acts as the Proton acceptor. Lys268 serves as the catalytic Proton donor. S-adenosyl-L-methionine-binding positions include 299–301 (GGD), Val304, 329–330 (TA), Met381, and Gly410.

The protein in the N-terminal section; belongs to the precorrin-2 dehydrogenase / sirohydrochlorin ferrochelatase family. This sequence in the C-terminal section; belongs to the precorrin methyltransferase family.

It catalyses the reaction uroporphyrinogen III + 2 S-adenosyl-L-methionine = precorrin-2 + 2 S-adenosyl-L-homocysteine + H(+). The enzyme catalyses precorrin-2 + NAD(+) = sirohydrochlorin + NADH + 2 H(+). It carries out the reaction siroheme + 2 H(+) = sirohydrochlorin + Fe(2+). It participates in cofactor biosynthesis; adenosylcobalamin biosynthesis; precorrin-2 from uroporphyrinogen III: step 1/1. The protein operates within cofactor biosynthesis; adenosylcobalamin biosynthesis; sirohydrochlorin from precorrin-2: step 1/1. Its pathway is porphyrin-containing compound metabolism; siroheme biosynthesis; precorrin-2 from uroporphyrinogen III: step 1/1. It functions in the pathway porphyrin-containing compound metabolism; siroheme biosynthesis; siroheme from sirohydrochlorin: step 1/1. It participates in porphyrin-containing compound metabolism; siroheme biosynthesis; sirohydrochlorin from precorrin-2: step 1/1. In terms of biological role, multifunctional enzyme that catalyzes the SAM-dependent methylations of uroporphyrinogen III at position C-2 and C-7 to form precorrin-2 via precorrin-1. Then it catalyzes the NAD-dependent ring dehydrogenation of precorrin-2 to yield sirohydrochlorin. Finally, it catalyzes the ferrochelation of sirohydrochlorin to yield siroheme. The polypeptide is Siroheme synthase (Mannheimia succiniciproducens (strain KCTC 0769BP / MBEL55E)).